The primary structure comprises 86 residues: Anti-adapter protein IraP (86 aa).

Residues 1 to 36 adopt a coiled-coil conformation; sequence MKNLISELLLRLAQKEEESKELVAQVEALEIIVTAM.

This sequence belongs to the IraP family. As to quaternary structure, interacts with RssB.

The protein resides in the cytoplasm. Inhibits RpoS proteolysis by regulating RssB activity, thereby increasing the stability of the sigma stress factor RpoS especially during phosphate starvation, but also in stationary phase and during nitrogen starvation. Its effect on RpoS stability is due to its interaction with RssB, which probably blocks the interaction of RssB with RpoS, and the consequent delivery of the RssB-RpoS complex to the ClpXP protein degradation pathway. In Citrobacter koseri (strain ATCC BAA-895 / CDC 4225-83 / SGSC4696), this protein is Anti-adapter protein IraP.